A 310-amino-acid chain; its full sequence is Zinc finger CCCH domain-containing protein 14 (310 aa).

Positions 56-75 (ESLSPSPPSSSSPPSRVDTT) are disordered. Positions 84–129 (KLILEYDELNEHYELCLNRLQSLMTELDSLRHENDSLRFENSDLLK) form a coiled coil. Residues 155–167 (QISDSRSAKRNNQ) are compositionally biased toward basic and acidic residues. Residues 155–174 (QISDSRSAKRNNQERNSLPK) are disordered. 2 C3H1-type zinc fingers span residues 232–260 (MMKT…HGID) and 270–298 (RYKT…HSLT).

As to expression, highly expressed in secondary cell wall-forming tissues and the xylem cells of roots. Expressed predominantly in inflorescence stems, flowers and siliques. Highly expressed in the basal portion of stems, where cells are undergoing secondary cell wall thickening.

In terms of biological role, functions probably as a transcriptional factor that activates genes involved in secondary cell wall biosynthesis. May play a role in both transcriptional and post-transcriptional regulation. Binds to ssDNA, dsDNA, and ribohomopolymers in vitro. Maybe involved in post-transcriptional regulation of its target genes. Targets RNA of a polygalacturonase, a well-known cell wall modifying gene. Functions redudantly with C3H15 to regulate secondary cell wall formation. C3H14 and C3H15 have overlapping roles in the regulation of secondary cell wall formation and anther development. C3H14 may contribute more to secondary cell wall thickening while C3H15 could be more important in anther development. May regulate at both the transcriptional and post-transcriptional levels the expression of many genes involved in various biological processes, particularly those associated with cell wall metabolism and pollen development. The polypeptide is Zinc finger CCCH domain-containing protein 14 (Arabidopsis thaliana (Mouse-ear cress)).